Reading from the N-terminus, the 267-residue chain is MTKILDDIVAYKQQEIAALKQQKTEASLIAELETLTDAPRGFMRALRDCRDRGGVAVVAEIKRASPNQGLLREQFMPELLAQECVQYGASCLSVFTDTHFFYGDVAYLSAVKKAVPVPVLRKDFIISRYQILESRLLGVDCILLIVAILTDEQLQEFVVLAHDLGMDVLIEIHDENDLKRALNVPVRTLAINNRNPEDFNASLEKSAQLRQQLPKDYFVISESGINTHADVVYLLNCGLDAVLIGGALMSAEFAGEALHHLIYGKED.

It belongs to the TrpC family.

It catalyses the reaction 1-(2-carboxyphenylamino)-1-deoxy-D-ribulose 5-phosphate + H(+) = (1S,2R)-1-C-(indol-3-yl)glycerol 3-phosphate + CO2 + H2O. The protein operates within amino-acid biosynthesis; L-tryptophan biosynthesis; L-tryptophan from chorismate: step 4/5. This Dichelobacter nodosus (strain VCS1703A) protein is Indole-3-glycerol phosphate synthase.